A 255-amino-acid polypeptide reads, in one-letter code: Pyridoxine 5'-phosphate synthase (255 aa).

A 3-amino-2-oxopropyl phosphate-binding site is contributed by Asn-6. Position 8 to 9 (8 to 9 (DH)) interacts with 1-deoxy-D-xylulose 5-phosphate. Arg-17 provides a ligand contact to 3-amino-2-oxopropyl phosphate. Catalysis depends on His-41, which acts as the Proton acceptor. Positions 43 and 48 each coordinate 1-deoxy-D-xylulose 5-phosphate. Residue Glu-68 is the Proton acceptor of the active site. Residue Thr-96 coordinates 1-deoxy-D-xylulose 5-phosphate. His-208 functions as the Proton donor in the catalytic mechanism. 3-amino-2-oxopropyl phosphate-binding positions include Gly-209 and 230–231 (GQ).

This sequence belongs to the PNP synthase family. In terms of assembly, homooctamer; tetramer of dimers.

It localises to the cytoplasm. The catalysed reaction is 3-amino-2-oxopropyl phosphate + 1-deoxy-D-xylulose 5-phosphate = pyridoxine 5'-phosphate + phosphate + 2 H2O + H(+). The protein operates within cofactor biosynthesis; pyridoxine 5'-phosphate biosynthesis; pyridoxine 5'-phosphate from D-erythrose 4-phosphate: step 5/5. Functionally, catalyzes the complicated ring closure reaction between the two acyclic compounds 1-deoxy-D-xylulose-5-phosphate (DXP) and 3-amino-2-oxopropyl phosphate (1-amino-acetone-3-phosphate or AAP) to form pyridoxine 5'-phosphate (PNP) and inorganic phosphate. The polypeptide is Pyridoxine 5'-phosphate synthase (Campylobacter lari (strain RM2100 / D67 / ATCC BAA-1060)).